Here is a 103-residue protein sequence, read N- to C-terminus: UPF0473 protein LBA0420 (103 aa).

This sequence belongs to the UPF0473 family.

In Lactobacillus acidophilus (strain ATCC 700396 / NCK56 / N2 / NCFM), this protein is UPF0473 protein LBA0420.